The following is a 753-amino-acid chain: MTILNHTLGFPRVGLRRELKKAQESYWAGNSTREELLAVGRELRARHWDQQKQAGIDLLPVGDFAWYDHVLTTSLLLGNVPQRHQNNDGSVDIDTLFRIGRGRAPTGEPAAAAEMTKWFNTNYHYMVPEFVKGQQFKLTWTQLLEEVDEALALGHKVKPVLLGPITYLWLGKVKGEQFDRLSLLNDILPVYQQVLAELAKRGIEWVQIDEPALVLELPQAWLNAYKPAYDALQGQVKLLLTTYFEGVTPNLDTITALPVQGLHVDLVHGKDDVAELHKRLPSDWLLSAGLINGRNVWRADLTEKYAQIKDIVGKRDLWVASSCSLLHSPIDLSVETRLDAEVKSWFAFALQKCHELALLRDALNSGDTAALAEWSAPIQARRHSTRVHNPAVEKRLAAITAQDSQRANVYEVRAEAQRARFKLPAWPTTTIGSFPQTTEIRTLRLDFKKGNLDANNYRTGIAEHIKQAIVEQERLGLDVLVHGEAERNDMVEYFGEHLDGFVFTQNGWVQSYGSRCVKPPIVIGDVSRPAPITVEWAKYAQSLTDKPVKGMLTGPVTILCWSFPREDVSRETIAKQIALALRDEVADLEAAGIGIIQIDEPALREGLPLRRSDWDAYLQWGVEAFRINAAVAKDDTQIHTHMCYCEFNDIMDSIAALDADVITIETSRSDMELLESFEEFDYPNEIGPGVYDIHSPNVPSVEWIEALLKKAAKRIPAERLWVNPDCGLKTRGWPETRAALANMVQAAQNLRRG.

Residues 17–20 (RELK) and Lys-117 contribute to the 5-methyltetrahydropteroyltri-L-glutamate site. L-homocysteine is bound by residues 431–433 (IGS) and Glu-484. Residues 431-433 (IGS) and Glu-484 each bind L-methionine. 5-methyltetrahydropteroyltri-L-glutamate contacts are provided by residues 515 to 516 (RC) and Trp-561. Asp-599 contributes to the L-homocysteine binding site. Asp-599 provides a ligand contact to L-methionine. Residue Glu-605 participates in 5-methyltetrahydropteroyltri-L-glutamate binding. Zn(2+)-binding residues include His-641, Cys-643, and Glu-665. Residue His-694 is the Proton donor of the active site. Cys-726 lines the Zn(2+) pocket.

It belongs to the vitamin-B12 independent methionine synthase family. It depends on Zn(2+) as a cofactor.

The enzyme catalyses 5-methyltetrahydropteroyltri-L-glutamate + L-homocysteine = tetrahydropteroyltri-L-glutamate + L-methionine. Its pathway is amino-acid biosynthesis; L-methionine biosynthesis via de novo pathway; L-methionine from L-homocysteine (MetE route): step 1/1. Catalyzes the transfer of a methyl group from 5-methyltetrahydrofolate to homocysteine resulting in methionine formation. The polypeptide is 5-methyltetrahydropteroyltriglutamate--homocysteine methyltransferase (Escherichia coli (strain UTI89 / UPEC)).